A 1384-amino-acid polypeptide reads, in one-letter code: Sterol 3-beta-glucosyltransferase (1384 aa).

Disordered regions lie at residues 1-64 (MPNM…DGQL), 86-189 (ARFD…TPRA), and 204-229 (DKKQ…QSCA). The span at 7-19 (LLEDAKRRVDRRL) shows a compositional bias: basic and acidic residues. Over residues 21–36 (ASRQSISSSRIFSSAF) the composition is skewed to low complexity. The segment covering 38-47 (DRLKDDHDAQ) has biased composition (basic and acidic residues). The segment covering 146–156 (LRSLKPSPKSS) has biased composition (low complexity). Residues 158–172 (GTETTVQTEPPTSDE) show a composition bias toward polar residues. A compositionally biased stretch (low complexity) spans 174 to 189 (SPLASPRRARSATPRA). The span at 209-229 (ADQPSSSTKGETDGTSEQSCA) shows a compositional bias: polar residues. In terms of domain architecture, GRAM 1 spans 237 to 284 (KEMFGFEMPEKVLMEYACSLLQNILLQGYMYVTEGHICFYAYLPRKSA). In terms of domain architecture, PH spans 285 to 384 (VTIRSGYLHK…WVKALQKVIF (100 aa)). 2 disordered regions span residues 457–526 (MKTS…RQRD) and 560–629 (NRSD…VNSS). Composition is skewed to polar residues over residues 458 to 473 (KTSQ…TSPA), 483 to 494 (WSLNSDLSQSRG), and 560 to 572 (NRSD…TIHT). A compositionally biased stretch (basic and acidic residues) spans 578–588 (PSGDRTGRRLS). The span at 604–629 (RNGQEMQYASSDSDQGTQHPSKVNSS) shows a compositional bias: polar residues. A GRAM 2 domain is found at 714-817 (RFRAHFALPS…RDDCAVTVHQ (104 aa)). The UDP-alpha-D-glucose site is built by S901, R902, D904, A1204, H1206, H1219, G1223, T1224, D1243, and Q1244. Residues 1322-1336 (VSSTPFSPTPSAKTT) show a composition bias toward polar residues. Positions 1322 to 1350 (VSSTPFSPTPSAKTTAEQEEDDVDDSEEW) are disordered. Residues 1338–1350 (EQEEDDVDDSEEW) are compositionally biased toward acidic residues.

The protein belongs to the glycosyltransferase 28 family.

The protein resides in the cytoplasm. It is found in the preautophagosomal structure membrane. The enzyme catalyses a sterol + UDP-alpha-D-glucose = a sterol 3-beta-D-glucoside + UDP + H(+). The catalysed reaction is ergosterol + UDP-alpha-D-glucose = ergosteryl 3-beta-D-glucoside + UDP + H(+). In terms of biological role, sterol glycosyltransferase responsible for the glycosylation of ergosterol to form ergosterol-glucoside. Involved in cytoplasm to vacuole transport (Cvt), pexophagy or nonselective autophagy. The chain is Sterol 3-beta-glucosyltransferase from Aspergillus oryzae (strain ATCC 42149 / RIB 40) (Yellow koji mold).